A 369-amino-acid chain; its full sequence is MAKLSLRNVQKTYAGNVKVVHGIDMEIADGEFIVIVGPSGCGKSTLLRMVAGLETITGGDIHIGDRVVNNLEPAERDIAMVFQNYALYPHMSVYDNMAYGLKIRGMAKAEIEQRVKHAAGILELAPLLDRKPRQLSGGQRQRVAMGRAIVREPSVFLFDEPLSNLDAKLRVQMRLELKELHRRLGTTSLYVTHDQVEAMTLADRMMVLNGGRVEQIGTPLEVYTRPASTFVAGFIGSPPMNLVPVARNGGMAGAGGVAQMRVLGKEGGASDATLGHLPMGLHLPAEALLGLRPEHIEPCAAHDAIAEVDVRVVEALGADSFAYGSLGGQPIVVRLDSHARVRAGDKLPVTSSPDHLHFFDAQSGKRIEA.

In terms of domain architecture, ABC transporter spans L4–I235. G37–S44 is an ATP binding site.

The protein belongs to the ABC transporter superfamily. sn-glycerol-3-phosphate importer (TC 3.A.1.1.3) family. As to quaternary structure, the complex is composed of two ATP-binding proteins (UgpC), two transmembrane proteins (UgpA and UgpE) and a solute-binding protein (UgpB).

It is found in the cell inner membrane. It carries out the reaction sn-glycerol 3-phosphate(out) + ATP + H2O = sn-glycerol 3-phosphate(in) + ADP + phosphate + H(+). Functionally, part of the ABC transporter complex UgpBAEC involved in sn-glycerol-3-phosphate (G3P) import. Responsible for energy coupling to the transport system. The protein is sn-glycerol-3-phosphate import ATP-binding protein UgpC of Cupriavidus pinatubonensis (strain JMP 134 / LMG 1197) (Cupriavidus necator (strain JMP 134)).